Consider the following 290-residue polypeptide: 4-hydroxy-tetrahydrodipicolinate synthase (290 aa).

Residue Thr44 coordinates pyruvate. Residue Tyr132 is the Proton donor/acceptor of the active site. Lys160 functions as the Schiff-base intermediate with substrate in the catalytic mechanism. Ile202 provides a ligand contact to pyruvate.

Belongs to the DapA family. In terms of assembly, homotetramer; dimer of dimers.

It is found in the cytoplasm. It catalyses the reaction L-aspartate 4-semialdehyde + pyruvate = (2S,4S)-4-hydroxy-2,3,4,5-tetrahydrodipicolinate + H2O + H(+). It functions in the pathway amino-acid biosynthesis; L-lysine biosynthesis via DAP pathway; (S)-tetrahydrodipicolinate from L-aspartate: step 3/4. In terms of biological role, catalyzes the condensation of (S)-aspartate-beta-semialdehyde [(S)-ASA] and pyruvate to 4-hydroxy-tetrahydrodipicolinate (HTPA). This is 4-hydroxy-tetrahydrodipicolinate synthase from Trichlorobacter lovleyi (strain ATCC BAA-1151 / DSM 17278 / SZ) (Geobacter lovleyi).